A 215-amino-acid polypeptide reads, in one-letter code: dITP/XTP pyrophosphatase (215 aa).

A substrate-binding site is contributed by 13–18; sequence THNIGK. The Proton acceptor role is filled by D74. D74 contacts Mg(2+). Substrate-binding positions include S75, 163–166, K186, and 199–200; these read FGFD and HR.

The protein belongs to the HAM1 NTPase family. In terms of assembly, homodimer. The cofactor is Mg(2+).

The catalysed reaction is XTP + H2O = XMP + diphosphate + H(+). The enzyme catalyses dITP + H2O = dIMP + diphosphate + H(+). It carries out the reaction ITP + H2O = IMP + diphosphate + H(+). Functionally, pyrophosphatase that catalyzes the hydrolysis of nucleoside triphosphates to their monophosphate derivatives, with a high preference for the non-canonical purine nucleotides XTP (xanthosine triphosphate), dITP (deoxyinosine triphosphate) and ITP. Seems to function as a house-cleaning enzyme that removes non-canonical purine nucleotides from the nucleotide pool, thus preventing their incorporation into DNA/RNA and avoiding chromosomal lesions. The sequence is that of dITP/XTP pyrophosphatase from Bartonella henselae (strain ATCC 49882 / DSM 28221 / CCUG 30454 / Houston 1) (Rochalimaea henselae).